We begin with the raw amino-acid sequence, 404 residues long: Exodeoxyribonuclease 7 large subunit (404 aa).

The protein belongs to the XseA family. Heterooligomer composed of large and small subunits.

It is found in the cytoplasm. It carries out the reaction Exonucleolytic cleavage in either 5'- to 3'- or 3'- to 5'-direction to yield nucleoside 5'-phosphates.. In terms of biological role, bidirectionally degrades single-stranded DNA into large acid-insoluble oligonucleotides, which are then degraded further into small acid-soluble oligonucleotides. This is Exodeoxyribonuclease 7 large subunit from Tropheryma whipplei (strain TW08/27) (Whipple's bacillus).